The sequence spans 229 residues: Cytochrome c oxidase subunit 2 (229 aa).

Over 1–26 the chain is Mitochondrial intermembrane; the sequence is MANWTQLGLQDASSPLMEELIYFHDY. The helical transmembrane segment at 27–48 threads the bilayer; sequence TLIILTLITILVFYGLASLIVS. Topologically, residues 49–62 are mitochondrial matrix; it reads SNTNRFFLEGQSLE. The chain crosses the membrane as a helical span at residues 63–82; that stretch reads TIWTVIPAVILIFIALPSLQ. Residues 83–229 lie on the Mitochondrial intermembrane side of the membrane; it reads LLYLIDEVNN…ENWVSNFLNE (147 aa). His161, Cys196, Glu198, Cys200, His204, and Met207 together coordinate Cu cation. Glu198 provides a ligand contact to Mg(2+).

This sequence belongs to the cytochrome c oxidase subunit 2 family. As to quaternary structure, component of the cytochrome c oxidase (complex IV, CIV), a multisubunit enzyme composed of a catalytic core of 3 subunits and several supernumerary subunits. The complex exists as a monomer or a dimer and forms supercomplexes (SCs) in the inner mitochondrial membrane with ubiquinol-cytochrome c oxidoreductase (cytochrome b-c1 complex, complex III, CIII). Requires Cu cation as cofactor.

It localises to the mitochondrion inner membrane. It catalyses the reaction 4 Fe(II)-[cytochrome c] + O2 + 8 H(+)(in) = 4 Fe(III)-[cytochrome c] + 2 H2O + 4 H(+)(out). Its function is as follows. Component of the cytochrome c oxidase, the last enzyme in the mitochondrial electron transport chain which drives oxidative phosphorylation. The respiratory chain contains 3 multisubunit complexes succinate dehydrogenase (complex II, CII), ubiquinol-cytochrome c oxidoreductase (cytochrome b-c1 complex, complex III, CIII) and cytochrome c oxidase (complex IV, CIV), that cooperate to transfer electrons derived from NADH and succinate to molecular oxygen, creating an electrochemical gradient over the inner membrane that drives transmembrane transport and the ATP synthase. Cytochrome c oxidase is the component of the respiratory chain that catalyzes the reduction of oxygen to water. Electrons originating from reduced cytochrome c in the intermembrane space (IMS) are transferred via the dinuclear copper A center (CU(A)) of subunit 2 and heme A of subunit 1 to the active site in subunit 1, a binuclear center (BNC) formed by heme A3 and copper B (CU(B)). The BNC reduces molecular oxygen to 2 water molecules using 4 electrons from cytochrome c in the IMS and 4 protons from the mitochondrial matrix. This is Cytochrome c oxidase subunit 2 (COII) from Pisaster ochraceus (Ochre sea star).